Reading from the N-terminus, the 436-residue chain is Methylenetetrahydrofolate--tRNA-(uracil-5-)-methyltransferase TrmFO (436 aa).

8–13 (GGGLAG) is a binding site for FAD.

This sequence belongs to the MnmG family. TrmFO subfamily. It depends on FAD as a cofactor.

The protein localises to the cytoplasm. It catalyses the reaction uridine(54) in tRNA + (6R)-5,10-methylene-5,6,7,8-tetrahydrofolate + NADH + H(+) = 5-methyluridine(54) in tRNA + (6S)-5,6,7,8-tetrahydrofolate + NAD(+). The enzyme catalyses uridine(54) in tRNA + (6R)-5,10-methylene-5,6,7,8-tetrahydrofolate + NADPH + H(+) = 5-methyluridine(54) in tRNA + (6S)-5,6,7,8-tetrahydrofolate + NADP(+). Catalyzes the folate-dependent formation of 5-methyl-uridine at position 54 (M-5-U54) in all tRNAs. The sequence is that of Methylenetetrahydrofolate--tRNA-(uracil-5-)-methyltransferase TrmFO from Syntrophomonas wolfei subsp. wolfei (strain DSM 2245B / Goettingen).